Reading from the N-terminus, the 87-residue chain is RNA-binding protein Hfq (87 aa).

Residues 9-68 (DPFLNTLRRERIPVSIYLVNGIKLQGYIESFDQFVILLKNSISQMIYKHAISTVVPNHTN) form the Sm domain. The interval 66-87 (HTNNQEHNQSQYNNNNACISKP) is disordered.

This sequence belongs to the Hfq family. Homohexamer.

RNA chaperone that binds small regulatory RNA (sRNAs) and mRNAs to facilitate mRNA translational regulation in response to envelope stress, environmental stress and changes in metabolite concentrations. Also binds with high specificity to tRNAs. This Wigglesworthia glossinidia brevipalpis protein is RNA-binding protein Hfq.